We begin with the raw amino-acid sequence, 120 residues long: NAD(P)H-quinone oxidoreductase subunit 3, chloroplastic (120 aa).

3 consecutive transmembrane segments (helical) span residues 9–29 (IFWAFLIISSVIPILAFLISA), 64–84 (MFALVFVVFDVETVFLYPWAM), and 88–108 (VLGVPVFIEAFIFMLILIVGL).

Belongs to the complex I subunit 3 family. As to quaternary structure, NDH is composed of at least 16 different subunits, 5 of which are encoded in the nucleus.

The protein localises to the plastid. The protein resides in the chloroplast thylakoid membrane. It carries out the reaction a plastoquinone + NADH + (n+1) H(+)(in) = a plastoquinol + NAD(+) + n H(+)(out). The enzyme catalyses a plastoquinone + NADPH + (n+1) H(+)(in) = a plastoquinol + NADP(+) + n H(+)(out). Its function is as follows. NDH shuttles electrons from NAD(P)H:plastoquinone, via FMN and iron-sulfur (Fe-S) centers, to quinones in the photosynthetic chain and possibly in a chloroplast respiratory chain. The immediate electron acceptor for the enzyme in this species is believed to be plastoquinone. Couples the redox reaction to proton translocation, and thus conserves the redox energy in a proton gradient. This chain is NAD(P)H-quinone oxidoreductase subunit 3, chloroplastic, found in Citrus sinensis (Sweet orange).